The sequence spans 254 residues: 3-deoxy-manno-octulosonate cytidylyltransferase (254 aa).

This sequence belongs to the KdsB family.

It is found in the cytoplasm. It catalyses the reaction 3-deoxy-alpha-D-manno-oct-2-ulosonate + CTP = CMP-3-deoxy-beta-D-manno-octulosonate + diphosphate. Its pathway is nucleotide-sugar biosynthesis; CMP-3-deoxy-D-manno-octulosonate biosynthesis; CMP-3-deoxy-D-manno-octulosonate from 3-deoxy-D-manno-octulosonate and CTP: step 1/1. It functions in the pathway bacterial outer membrane biogenesis; lipopolysaccharide biosynthesis. Its function is as follows. Activates KDO (a required 8-carbon sugar) for incorporation into bacterial lipopolysaccharide in Gram-negative bacteria. The protein is 3-deoxy-manno-octulosonate cytidylyltransferase of Pseudomonas aeruginosa (strain ATCC 15692 / DSM 22644 / CIP 104116 / JCM 14847 / LMG 12228 / 1C / PRS 101 / PAO1).